A 535-amino-acid polypeptide reads, in one-letter code: Suppressor of cytokine signaling 6 (535 aa).

Residues 80 to 89 (RLSAKQKSKG) show a composition bias toward basic residues. The segment at 80 to 105 (RLSAKQKSKGKAGTPSGSSADEDTFS) is disordered. Positions 384-491 (WYWGPITRWE…TYPVRLTNPV (108 aa)) constitute an SH2 domain. The SOCS box domain occupies 486 to 535 (RLTNPVSRFMQVRSLQYLCRFVIRQYTRIDLIQKLPLPNKMKDYLQEKHY).

As to quaternary structure, interacts with RBCK1. Interacts with phosphorylated IRS4. Interacts with PIM3. Interacts with KIT (phosphorylated).

It participates in protein modification; protein ubiquitination. SOCS family proteins form part of a classical negative feedback system that regulates cytokine signal transduction. May be a substrate recognition component of a SCF-like ECS (Elongin BC-CUL2/5-SOCS-box protein) E3 ubiquitin-protein ligase complex which mediates the ubiquitination and subsequent proteasomal degradation of target proteins. Regulates KIT degradation by ubiquitination of the tyrosine-phosphorylated receptor. The chain is Suppressor of cytokine signaling 6 (SOCS6) from Homo sapiens (Human).